A 149-amino-acid chain; its full sequence is Ribonuclease H (149 aa).

An RNase H type-1 domain is found at 5 to 146; sequence QRPHVVIFTD…ADELAREGLA (142 aa). The Mg(2+) site is built by Asp-14, Glu-52, Asp-74, and Asp-138.

The protein belongs to the RNase H family. Monomer. The cofactor is Mg(2+).

The protein resides in the cytoplasm. It catalyses the reaction Endonucleolytic cleavage to 5'-phosphomonoester.. Functionally, endonuclease that specifically degrades the RNA of RNA-DNA hybrids. In Afipia carboxidovorans (strain ATCC 49405 / DSM 1227 / KCTC 32145 / OM5) (Oligotropha carboxidovorans), this protein is Ribonuclease H.